Reading from the N-terminus, the 318-residue chain is uncharacterized protein (318 aa).

The span at methionine 1–tyrosine 22 shows a compositional bias: basic and acidic residues. 2 disordered regions span residues methionine 1 to arginine 29 and aspartate 293 to glutamate 318.

This is an uncharacterized protein from Ictalurid herpesvirus 1 (strain Auburn) (IcHV-1).